The sequence spans 87 residues: U15-lycotoxin-Ls1f (87 aa).

The N-terminal stretch at 1-20 (MNSKIFAVLLLLGLLSCVLS) is a signal peptide. One can recognise a WAP domain in the interval 21-66 (DQYCPKSSITACKKMNIRNDCCKDDDCTGGSWCCATPCGNFCKYPT). 5 disulfide bridges follow: cysteine 24/cysteine 54, cysteine 32/cysteine 58, cysteine 41/cysteine 53, cysteine 42/cysteine 80, and cysteine 47/cysteine 62.

The protein belongs to the venom protein 11 family. 01 (wap-1) subfamily. In terms of processing, contains 5 disulfide bonds. Expressed by the venom gland.

The protein localises to the secreted. In terms of biological role, has antibacterial activity. The chain is U15-lycotoxin-Ls1f from Lycosa singoriensis (Wolf spider).